We begin with the raw amino-acid sequence, 502 residues long: Myocilin (502 aa).

The signal sequence occupies residues 1 to 31 (MPSCAYCCSCGPKMPALQLLFLACLVWGMGA). Residues 82 to 183 (ADLESTKARV…QEVARLRRGQ (102 aa)) are a coiled coil. Residues 166–198 (ARRLEGSSQEVARLRRGQCPSTHHPSQDMLPGS) form a disordered region. The N-linked (GlcNAc...) asparagine glycan is linked to Asn-229. Residues 242-501 (GCGVLMWVGE…MVTYDIKLSE (260 aa)) enclose the Olfactomedin-like domain. Cys-243 and Cys-431 are joined by a disulfide. Ca(2+) is bound by residues Asp-378, Asn-426, Ala-427, Val-475, and Asp-476.

As to quaternary structure, homodimer (via N-terminus). Can also form higher oligomers. Interacts with OLFM3, FN1, NRCAM, GLDN and NFASC. Interacts (via N-terminus) with MYL2. Interacts with SFRP1, FRZB, FZD7, FZD10, FZD1 and WIF1; regulates Wnt signaling. Interacts with SNTA1; regulates muscle hypertrophy. Interacts with ERBB2 and ERBB3; activates ERBB2-ERBB3 signaling pathway. Interacts with SNCG; affects its secretion and its aggregation. Post-translationally, palmitoylated. Undergoes a calcium-dependent proteolytic cleavage at Gln-225 by CAPN2 in the endoplasmic reticulum. The result is the production of two fragments, one of 35 kDa containing the C-terminal olfactomedin-like domain, and another of 20 kDa containing the N-terminal leucine zipper-like domain. In terms of processing, glycosylated. As to expression, highly expressed in skeletal muscle and retina. Also detected at lower levels in thyroid gland but not in other endocrine glands such as the adrenal or pituitary glands.

The protein resides in the secreted. Its subcellular location is the golgi apparatus. It localises to the cytoplasmic vesicle. The protein localises to the extracellular space. It is found in the extracellular matrix. The protein resides in the extracellular exosome. Its subcellular location is the mitochondrion. It localises to the mitochondrion intermembrane space. The protein localises to the mitochondrion inner membrane. It is found in the mitochondrion outer membrane. The protein resides in the rough endoplasmic reticulum. Its subcellular location is the cell projection. It localises to the cilium. The protein localises to the endoplasmic reticulum. Functionally, secreted glycoprotein regulating the activation of different signaling pathways in adjacent cells to control different processes including cell adhesion, cell-matrix adhesion, cytoskeleton organization and cell migration. Promotes substrate adhesion, spreading and formation of focal contacts. Negatively regulates cell-matrix adhesion and stress fiber assembly through Rho protein signal transduction. Modulates the organization of actin cytoskeleton by stimulating the formation of stress fibers through interactions with components of Wnt signaling pathways. Promotes cell migration through activation of PTK2 and the downstream phosphatidylinositol 3-kinase signaling. Plays a role in bone formation and promotes osteoblast differentiation in a dose-dependent manner through mitogen-activated protein kinase signaling. Mediates myelination in the peripheral nervous system through ERBB2/ERBB3 signaling. Plays a role as a regulator of muscle hypertrophy through the components of dystrophin-associated protein complex. Involved in positive regulation of mitochondrial depolarization. Plays a role in neurite outgrowth. May participate in the obstruction of fluid outflow in the trabecular meshwork. The sequence is that of Myocilin (Myoc) from Rattus norvegicus (Rat).